The chain runs to 152 residues: Small ribosomal subunit protein uS11A (152 aa).

The tract at residues 131–152 is disordered; it reads EDVTPIPSDSTRRKGGRRGRRL. Residues 143–152 are compositionally biased toward basic residues; that stretch reads RKGGRRGRRL.

Belongs to the universal ribosomal protein uS11 family.

The polypeptide is Small ribosomal subunit protein uS11A (Anopheles gambiae (African malaria mosquito)).